A 762-amino-acid chain; its full sequence is Coleoptile phototropism protein 1 (762 aa).

Positions 1-12 (MWESESESHGGE) are enriched in basic and acidic residues. The interval 1 to 29 (MWESESESHGGERGLVPVGGGGGSGRHEA) is disordered. The BTB domain occupies 51-128 (SDLLVKVGDV…SYGMAVDLTA (78 aa)). Positions 227–238 (PAAIRGGGGSGG) are enriched in gly residues. 4 disordered regions span residues 227-264 (PAAI…RQAV), 460-495 (MAVA…ASAS), 687-718 (QVDG…AWSS), and 731-762 (GADA…NSIS). The NPH3 domain maps to 268–607 (DWWFEDVSVL…VQVLFTEQVK (340 aa)). Residues 654–691 (AAAKKDINTLKFELESMKAKYLELQHEMDALQKQVDGR) are a coiled coil. Over residues 696–709 (PSPAAAKIGKQQQQ) the composition is skewed to low complexity. Gly residues predominate over residues 736–747 (AGGGVAPPGGGE). Positions 752 to 762 (KGPRRWRNSIS) are enriched in basic residues.

This sequence belongs to the NPH3 family.

It participates in protein modification; protein ubiquitination. May act as a substrate-specific adapter of an E3 ubiquitin-protein ligase complex (CUL3-RBX1-BTB) which mediates the ubiquitination and subsequent proteasomal degradation of target proteins. Plays a role as signal transduction component in coleoptile phototropism and lateral translocation of auxin. The chain is Coleoptile phototropism protein 1 (CPT1) from Oryza sativa subsp. japonica (Rice).